The primary structure comprises 296 residues: LysM and putative peptidoglycan-binding domain-containing protein 4 (296 aa).

At 1 to 217 (MRHKELLSKT…PMDGADCGIQ (217 aa)) the chain is on the extracellular side. Residue N30 is glycosylated (N-linked (GlcNAc...) asparagine). In terms of domain architecture, LysM spans 74 to 118 (LQRELAQEDSLNKLALQYGCKVADIKKVNNFIREQDLYALKSIKS). The chain crosses the membrane as a helical span at residues 218-238 (WWNAVFIMLLIGIVLPIFYLV). The Cytoplasmic segment spans residues 239–296 (YFKIQASGETPNSLNTAAIPNGSMAMGTVPGQAPRLAVAVPTVPSADSQFSQTTQAGN).

Its subcellular location is the membrane. In Pongo abelii (Sumatran orangutan), this protein is LysM and putative peptidoglycan-binding domain-containing protein 4 (LYSMD4).